A 636-amino-acid chain; its full sequence is MNPSAPSYPMASLYVGDLHPDATEAMLYEKFSPAGPILSIRVCRDMITRRSLGYAYVNFQQPADAERALDTMNFDVIKGKPVRIMWSQRDPSLRKSGVGNIFIKNLDKSIDNKALYDTFSAFGNILSCKVVCDENGSKGYGFVHFETQEAAERAIEKMNGMLLNDRKVFVGRFKSRKEREAELGARAKEFTNVYIKNFGEDMDDERLKDLFGKFGPALSVKVMTDESGKSKGFGFVSFERHEDAQKAVDEMNGKELNGKQIYVGRAQKKVERQTELKRKFEQMKQDRITRYQGVNLYVKNLDDGIDDERLRKEFSPFGTITSAKVMMEGGRSKGFGFVCFSSPEEATKAVTEMNGRIVATKPLYVALAQRKEERQAHLTNQYMQRMASVRAVPNPVINPYQPAPPSGYFMAAIPQTQNRAAYYPPSQIAQLRPSPRWTAQGARPHPFQNMPGAIRPAAPRPPFSTMRPASSQVPRVMSTQRVANTSTQTMGPRPAAAAAAATPAVRTVPQYKYAAGVRNPQQHLNAQPQVTMQQPAVHVQGQEPLTASMLASAPPQEQKQMLGERLFPLIQAMHPTLAGKITGMLLEIDNSELLHMLESPESLRSKVDEAVAVLQAHQAKEAAQKAVNSATGVPTV.

M1 bears the N-acetylmethionine mark. 4 consecutive RRM domains span residues 11–89 (ASLY…WSQR), 99–175 (GNIF…RFKS), 191–268 (TNVY…RAQK), and 294–370 (VNLY…LAQR). Positions 166–289 (RKVFVGRFKS…FEQMKQDRIT (124 aa)) are CSDE1-binding. K299 bears the N6-methyllysine mark. Position 315 is a phosphoserine (S315). The residue at position 319 (T319) is a Phosphothreonine. Residues R385, R419, R432, and R436 each carry the omega-N-methylarginine modification. Omega-N-methylated arginine; by CARM1 is present on residues R455 and R460. 2 positions are modified to omega-N-methylarginine: R475 and R481. The residue at position 493 (R493) is an Asymmetric dimethylarginine; alternate. R493 is modified (dimethylated arginine; alternate). The residue at position 493 (R493) is an Omega-N-methylarginine; alternate. Position 506 is an omega-N-methylarginine (R506). N6-acetyllysine is present on K512. At R518 the chain carries Omega-N-methylarginine. The 78-residue stretch at 542–619 (QEPLTASMLA…AVAVLQAHQA (78 aa)) folds into the PABC domain.

It belongs to the polyadenylate-binding protein type-1 family. May form homodimers. Component of a multisubunit autoregulatory ribonucleoprotein complex (ARC), at least composed of IGF2BP1, PABPC1 and CSDE1. Directly interacts with IGF2BP1. Part of a complex associated with the FOS mCRD domain and consisting of HNRPD, SYNCRIP, PAIP1 and CSDE1/UNR. Interacts with PAIP1 and PAIP2 (via the PABPC1-interacting motifs PAM1 and PAM2). Interacts with PAIP1 with a 1:1 stoichiometry and with PAIP2 with a 1:2 stoichiometry. The interaction with CSDE1 is direct and RNA-independent. Found in a mRNP complex with YBX2. Interacts with TENT2/GLD2. Identified in the spliceosome C complex. Identified in a mRNP complex, at least composed of DHX9, DDX3X, ELAVL1, HNRNPU, IGF2BP1, ILF3, PABPC1, PCBP2, PTBP2, STAU1, STAU2, SYNCRIP and YBX1. The interaction with DDX3X is direct and RNA-independent. This interaction increases in stressed cells and decreases during cell recovery. Identified in a IGF2BP1-dependent mRNP granule complex containing untranslated mRNAs. Interacts with NXF1/TAP. Interacts with PIWIL1. Interacts with AGO1, AGO2, GSPT1 and GSPT2. Interacts with LARP4B. Interacts (via the second and third RRM domains and the C-terminus) with PAIP2B (via central acidic portion and C-terminus). Forms a complex with LARP1 and SHFL. Interacts with LARP4. Interacts with ZFC3H1 in a RNase-sensitive manner. Interacts with TRIM71 (via NHL repeats) in an RNA-dependent manner. Interacts with TENT5C; the interaction has no effect on TENT5C poly(A) polymerase function. Interacts with G3BP1 and G3BP2. Interacts with ENDOV; the interaction is RNA-dependent and stimulates ENDOV activity. Interacts with UPF1; the interaction is RNA-dependent. Interacts with IGF2BP2 and IGF2BP3. May interact with SETX. Interacts with RBM46. Interacts with PAN3. In terms of processing, phosphorylated by MAPKAPK2. Post-translationally, methylated by CARM1. Arg-493 is dimethylated, probably to asymmetric dimethylarginine.

It is found in the cytoplasm. The protein localises to the stress granule. It localises to the nucleus. The protein resides in the cell projection. Its subcellular location is the lamellipodium. In terms of biological role, binds the poly(A) tail of mRNA, including that of its own transcript, and regulates processes of mRNA metabolism such as pre-mRNA splicing and mRNA stability. Its function in translational initiation regulation can either be enhanced by PAIP1 or repressed by PAIP2. Can probably bind to cytoplasmic RNA sequences other than poly(A) in vivo. Binds to N6-methyladenosine (m6A)-containing mRNAs and contributes to MYC stability by binding to m6A-containing MYC mRNAs. Involved in translationally coupled mRNA turnover. Implicated with other RNA-binding proteins in the cytoplasmic deadenylation/translational and decay interplay of the FOS mRNA mediated by the major coding-region determinant of instability (mCRD) domain. Involved in regulation of nonsense-mediated decay (NMD) of mRNAs containing premature stop codons; for the recognition of premature termination codons (PTC) and initiation of NMD a competitive interaction between UPF1 and PABPC1 with the ribosome-bound release factors is proposed. By binding to long poly(A) tails, may protect them from uridylation by ZCCHC6/ZCCHC11 and hence contribute to mRNA stability. This is Polyadenylate-binding protein 1 (PABPC1) from Pongo abelii (Sumatran orangutan).